A 165-amino-acid chain; its full sequence is E3 ubiquitin ligase complex SCF subunit sconC (165 aa).

The interval 106 to 165 (ILAANYLDIKALLDVGCKTVANMIKGKSPEEIRKTFNIQNDFTPEEEDQIRRENEWAEDR) is interaction with the F-box domain of F-box proteins.

Belongs to the SKP1 family. Component of the SCF (SKP1-CUL1-F-box protein) E3 ubiquitin ligase complexes.

It functions in the pathway protein modification; protein ubiquitination. Its function is as follows. Essential component of the SCF (SKP1-CUL1-F-box protein) E3 ubiquitin ligase complexes, which mediate the ubiquitination and subsequent proteasomal degradation of target proteins. Controls sulfur metabolite repression, probably by mediating the inactivation or degradation of the metR transcription factor. The sequence is that of E3 ubiquitin ligase complex SCF subunit sconC (sconC) from Arthroderma otae (Microsporum canis).